The chain runs to 350 residues: Biotin synthase (350 aa).

One can recognise a Radical SAM core domain in the interval 63–281 (GDIELATLLS…IAVARITMPK (219 aa)). [4Fe-4S] cluster contacts are provided by C78, C82, and C85. [2Fe-2S] cluster-binding residues include C122, C153, C213, and R285.

The protein belongs to the radical SAM superfamily. Biotin synthase family. Homodimer. It depends on [4Fe-4S] cluster as a cofactor. The cofactor is [2Fe-2S] cluster.

It catalyses the reaction (4R,5S)-dethiobiotin + (sulfur carrier)-SH + 2 reduced [2Fe-2S]-[ferredoxin] + 2 S-adenosyl-L-methionine = (sulfur carrier)-H + biotin + 2 5'-deoxyadenosine + 2 L-methionine + 2 oxidized [2Fe-2S]-[ferredoxin]. The protein operates within cofactor biosynthesis; biotin biosynthesis; biotin from 7,8-diaminononanoate: step 2/2. Its function is as follows. Catalyzes the conversion of dethiobiotin (DTB) to biotin by the insertion of a sulfur atom into dethiobiotin via a radical-based mechanism. The protein is Biotin synthase of Acidovorax ebreus (strain TPSY) (Diaphorobacter sp. (strain TPSY)).